The sequence spans 451 residues: Glycine--tRNA ligase (451 aa).

The substrate site is built by R99 and E168. Residues 200-202 (RNE), 210-215 (FRTREF), 284-285 (EL), and 328-331 (GLDR) contribute to the ATP site. A substrate-binding site is contributed by 215 to 219 (FEQME). 324–328 (EPSVG) lines the substrate pocket.

This sequence belongs to the class-II aminoacyl-tRNA synthetase family. As to quaternary structure, homodimer.

It localises to the cytoplasm. The catalysed reaction is tRNA(Gly) + glycine + ATP = glycyl-tRNA(Gly) + AMP + diphosphate. Functionally, catalyzes the attachment of glycine to tRNA(Gly). The polypeptide is Glycine--tRNA ligase (Mycoplasmopsis synoviae (strain 53) (Mycoplasma synoviae)).